Reading from the N-terminus, the 98-residue chain is Beta-2-microglobulin (98 aa).

One can recognise an Ig-like C1-type domain in the interval 4-92; that stretch reads PKVQVYSRFP…HETLKEPQVY (89 aa). A disulfide bridge links cysteine 24 with cysteine 79.

The protein belongs to the beta-2-microglobulin family. In terms of assembly, heterodimer of an alpha chain and a beta chain. Beta-2-microglobulin is the beta-chain of major histocompatibility complex class I molecules.

It localises to the secreted. In terms of biological role, component of the class I major histocompatibility complex (MHC). Involved in the presentation of peptide antigens to the immune system. This is Beta-2-microglobulin (B2M) from Meleagris gallopavo (Wild turkey).